We begin with the raw amino-acid sequence, 278 residues long: Large ribosomal subunit protein uL2 (278 aa).

A disordered region spans residues 222-264 (RGVAMNPVDHPHGGGEGRTSGGRNPVTPWGVPTKGKKTRSNKR).

This sequence belongs to the universal ribosomal protein uL2 family. In terms of assembly, part of the 50S ribosomal subunit. Forms a bridge to the 30S subunit in the 70S ribosome.

One of the primary rRNA binding proteins. Required for association of the 30S and 50S subunits to form the 70S ribosome, for tRNA binding and peptide bond formation. It has been suggested to have peptidyltransferase activity; this is somewhat controversial. Makes several contacts with the 16S rRNA in the 70S ribosome. The polypeptide is Large ribosomal subunit protein uL2 (Methylobacterium radiotolerans (strain ATCC 27329 / DSM 1819 / JCM 2831 / NBRC 15690 / NCIMB 10815 / 0-1)).